The sequence spans 53 residues: Small polypeptide DEVIL 16 (53 aa).

N-linked (GlcNAc...) asparagine glycosylation is present at Asn6. The interval 14–45 is required for DVL/RTFL small polypeptide activity; sequence TFGQKCSHVVKKQRAKFYILRRCIAMLVCWHD. A helical membrane pass occupies residues 30 to 46; it reads FYILRRCIAMLVCWHDQ.

This sequence belongs to the DVL/RTFL small polypeptides family. As to expression, mostly expressed in stems, flower buds, flowers and seedling shoots, to a lesser extent, in roots and young cauline leaves, but not in mature rosette leaves. Barely observed in cotyledons and leaf primordia.

It localises to the cell membrane. Its function is as follows. Small polypeptide acting as a regulatory molecule which coordinates cellular responses required for differentiation, growth and development, probably by restricting polar cell proliferation in lateral organs (e.g. leaves) and coordinating socket cell recruitment and differentiation at trichome sites. Regulates the positional cue and cell proliferation along the body axis. The protein is Small polypeptide DEVIL 16 of Arabidopsis thaliana (Mouse-ear cress).